The chain runs to 1364 residues: DNA-directed RNA polymerase subunit beta' (1364 aa).

Positions 250, 317, 324, and 327 each coordinate Zn(2+). Residues 1318–1342 form a disordered region; it reads TRHNIDPSASTNAAFTRPDVDNELK.

This sequence belongs to the RNA polymerase beta' chain family. RpoC2 subfamily. As to quaternary structure, in cyanobacteria the RNAP catalytic core is composed of 2 alpha, 1 beta, 1 beta', 1 gamma and 1 omega subunit. When a sigma factor is associated with the core the holoenzyme is formed, which can initiate transcription. Zn(2+) is required as a cofactor.

The catalysed reaction is RNA(n) + a ribonucleoside 5'-triphosphate = RNA(n+1) + diphosphate. In terms of biological role, DNA-dependent RNA polymerase catalyzes the transcription of DNA into RNA using the four ribonucleoside triphosphates as substrates. The protein is DNA-directed RNA polymerase subunit beta' of Synechococcus sp. (strain CC9902).